Here is a 72-residue protein sequence, read N- to C-terminus: Large ribosomal subunit protein bL28 (72 aa).

Belongs to the bacterial ribosomal protein bL28 family.

The sequence is that of Large ribosomal subunit protein bL28 from Chlorobium phaeovibrioides (strain DSM 265 / 1930) (Prosthecochloris vibrioformis (strain DSM 265)).